Reading from the N-terminus, the 181-residue chain is Peptide deformylase (181 aa).

Residues cysteine 103 and histidine 145 each contribute to the Fe cation site. Glutamate 146 is a catalytic residue. Histidine 149 lines the Fe cation pocket.

This sequence belongs to the polypeptide deformylase family. The cofactor is Fe(2+).

It catalyses the reaction N-terminal N-formyl-L-methionyl-[peptide] + H2O = N-terminal L-methionyl-[peptide] + formate. In terms of biological role, removes the formyl group from the N-terminal Met of newly synthesized proteins. Requires at least a dipeptide for an efficient rate of reaction. N-terminal L-methionine is a prerequisite for activity but the enzyme has broad specificity at other positions. The sequence is that of Peptide deformylase from Orientia tsutsugamushi (strain Ikeda) (Rickettsia tsutsugamushi).